A 2271-amino-acid chain; its full sequence is Serine-rich adhesin for platelets (2271 aa).

The N-terminal stretch at 1–89 is a signal peptide; it reads MSKRQKAFHD…VNMLHDQQAF (89 aa). Positions 90–230 are serine-rich repeat region 1, SRR1; it reads AASDAPLTSE…KTSTTSTSTA (141 aa). Over residues 100-111 the composition is skewed to polar residues; sequence LNTQSETVGNQN. Disordered stretches follow at residues 100–229, 751–791, and 806–2243; these read LNTQ…STST, NSMS…VVST, and SVSA…GLLG. A compositionally biased stretch (low complexity) spans 112–128; the sequence is STTIEASTSTADSTSVT. The segment covering 129-140 has biased composition (polar residues); it reads KNSSSVQTSNSD. The span at 150-229 shows a compositional bias: low complexity; the sequence is VTSTTNSTSN…NKTSTTSTST (80 aa). The interval 231–751 is non-repeat region (NRR); that stretch reads PVKLRTFSRL…TTFKYEVTRN (521 aa). Composition is skewed to low complexity over residues 752–791, 806–1392, and 1402–2214; these read SMSD…VVST, SVSA…LSLS, and SNSA…ATSE. The interval 752–2232 is serine-rich repeat region 2, SRR2; sequence SMSDSVSTSG…AQSEKRLPDT (1481 aa). The short motif at 2229 to 2233 is the LPXTG sorting signal element; sequence LPDTG. Thr-2232 carries the post-translational modification Pentaglycyl murein peptidoglycan amidated threonine. A propeptide spans 2233 to 2271 (removed by sortase); that stretch reads GDSIKQNGLLGGVMTLLVGLGLMKRKKKKDENDQDDSQA.

Belongs to the serine-rich repeat protein (SRRP) family. Proteolytically cleaved by a metalloprotease. Post-translationally, glycosylated. It is probable that most of the Ser residues in SSR1 and SSR2 are O-GlcNAcylated. Sequential glycosylation by sugar transferases are able to generate complex sugar polymorphisms.

It localises to the secreted. The protein resides in the cell wall. In terms of biological role, mediates binding to human platelets, possibly through a receptor-ligand interaction. Probably associated with virulence in endovascular infection. This is Serine-rich adhesin for platelets (sraP) from Staphylococcus aureus (strain USA300).